The sequence spans 314 residues: Ribosomal RNA small subunit methyltransferase H (314 aa).

Residues 40-42, Asp60, Phe85, Asp107, and Gln114 each bind S-adenosyl-L-methionine; that span reads GGH.

Belongs to the methyltransferase superfamily. RsmH family.

It is found in the cytoplasm. It carries out the reaction cytidine(1402) in 16S rRNA + S-adenosyl-L-methionine = N(4)-methylcytidine(1402) in 16S rRNA + S-adenosyl-L-homocysteine + H(+). Specifically methylates the N4 position of cytidine in position 1402 (C1402) of 16S rRNA. The chain is Ribosomal RNA small subunit methyltransferase H from Hydrogenovibrio crunogenus (strain DSM 25203 / XCL-2) (Thiomicrospira crunogena).